The primary structure comprises 427 residues: Putative B3 domain-containing protein Os04g0346900 (427 aa).

2 DNA-binding regions (TF-B3) span residues 25-118 and 140-236; these read LVPS…FDTT and KPQF…FGPN. Residues 253 to 309 form a disordered region; sequence TGEQQEAPSFSRRKCNNKKKSRFGEDDGNQQEMPCSRKGSGNKGRTSDRETKRMRKT. A compositionally biased stretch (basic residues) spans 263 to 273; the sequence is SRRKCNNKKKS. Positions 320 to 427 form a DNA-binding region, TF-B3 3; it reads WIKKEINEYV…TLWRVDIERC (108 aa).

Its subcellular location is the nucleus. This Oryza sativa subsp. japonica (Rice) protein is Putative B3 domain-containing protein Os04g0346900.